The following is a 273-amino-acid chain: 4-hydroxy-tetrahydrodipicolinate reductase (273 aa).

Residues 12–17 and Glu38 contribute to the NAD(+) site; that span reads GAGGRM. Arg39 serves as a coordination point for NADP(+). NAD(+)-binding positions include 102 to 104 and 126 to 129; these read GTT and AANF. The Proton donor/acceptor role is filled by His159. His160 contacts (S)-2,3,4,5-tetrahydrodipicolinate. Catalysis depends on Lys163, which acts as the Proton donor. 169-170 provides a ligand contact to (S)-2,3,4,5-tetrahydrodipicolinate; the sequence is GT.

It belongs to the DapB family. In terms of assembly, homotetramer.

The protein localises to the cytoplasm. The enzyme catalyses (S)-2,3,4,5-tetrahydrodipicolinate + NAD(+) + H2O = (2S,4S)-4-hydroxy-2,3,4,5-tetrahydrodipicolinate + NADH + H(+). The catalysed reaction is (S)-2,3,4,5-tetrahydrodipicolinate + NADP(+) + H2O = (2S,4S)-4-hydroxy-2,3,4,5-tetrahydrodipicolinate + NADPH + H(+). It functions in the pathway amino-acid biosynthesis; L-lysine biosynthesis via DAP pathway; (S)-tetrahydrodipicolinate from L-aspartate: step 4/4. Functionally, catalyzes the conversion of 4-hydroxy-tetrahydrodipicolinate (HTPA) to tetrahydrodipicolinate. This chain is 4-hydroxy-tetrahydrodipicolinate reductase, found in Salmonella choleraesuis (strain SC-B67).